The primary structure comprises 757 residues: Dynamin-related protein DNM1 (757 aa).

One can recognise a Dynamin-type G domain in the interval Thr25–Pro333. A G1 motif region spans residues Gly35–Ser42. Residue Gly35–Ser42 participates in GTP binding. The segment at Val61–Arg63 is G2 motif. Positions Asp175–Gly178 are G3 motif. GTP is bound by residues Asp175–Ile179 and Thr244–Asp247. A G4 motif region spans residues Thr244–Asp247. Residues Val274–Ser277 are G5 motif. Positions Ser557–Ala597 are disordered. Over residues Thr567–Ile580 the composition is skewed to low complexity. Ser629 bears the Phosphoserine mark. The GED domain maps to Cys670–Leu757.

Belongs to the TRAFAC class dynamin-like GTPase superfamily. Dynamin/Fzo/YdjA family. Interacts with FIS1 and MDV1.

It localises to the mitochondrion outer membrane. It catalyses the reaction GTP + H2O = GDP + phosphate + H(+). In terms of biological role, microtubule-associated force-producing protein that participates mitochondrial fission. Fission of mitochondria occurs in many cell types and constitutes an important step in mitochondria morphology, which is balanced between fusion and fission. Functions antagonistically with FZO1. The chain is Dynamin-related protein DNM1 (DNM1) from Saccharomyces cerevisiae (strain ATCC 204508 / S288c) (Baker's yeast).